We begin with the raw amino-acid sequence, 395 residues long: S-adenosylmethionine synthase (395 aa).

Histidine 19 provides a ligand contact to ATP. Mg(2+) is bound at residue aspartate 21. Position 47 (glutamate 47) interacts with K(+). L-methionine is bound by residues glutamate 60 and glutamine 103. Residues 103-113 (QSPDIAQGVNS) form a flexible loop region. Residues 170-172 (DNK), 236-237 (KF), aspartate 245, 251-252 (RK), alanine 268, and lysine 272 each bind ATP. Aspartate 245 lines the L-methionine pocket. Residue lysine 276 participates in L-methionine binding.

This sequence belongs to the AdoMet synthase family. In terms of assembly, homotetramer; dimer of dimers. Mg(2+) is required as a cofactor. K(+) serves as cofactor.

It is found in the cytoplasm. The enzyme catalyses L-methionine + ATP + H2O = S-adenosyl-L-methionine + phosphate + diphosphate. It participates in amino-acid biosynthesis; S-adenosyl-L-methionine biosynthesis; S-adenosyl-L-methionine from L-methionine: step 1/1. Functionally, catalyzes the formation of S-adenosylmethionine (AdoMet) from methionine and ATP. The overall synthetic reaction is composed of two sequential steps, AdoMet formation and the subsequent tripolyphosphate hydrolysis which occurs prior to release of AdoMet from the enzyme. The polypeptide is S-adenosylmethionine synthase (Rhodopirellula baltica (strain DSM 10527 / NCIMB 13988 / SH1)).